Consider the following 297-residue polypeptide: Probable porphobilinogen deaminase (297 aa).

At Cys233 the chain carries S-(dipyrrolylmethanemethyl)cysteine.

Belongs to the HMBS family. Requires dipyrromethane as cofactor.

The catalysed reaction is 4 porphobilinogen + H2O = hydroxymethylbilane + 4 NH4(+). Its pathway is porphyrin-containing compound metabolism; protoporphyrin-IX biosynthesis; coproporphyrinogen-III from 5-aminolevulinate: step 2/4. In terms of biological role, tetrapolymerization of the monopyrrole PBG into the hydroxymethylbilane pre-uroporphyrinogen in several discrete steps. The polypeptide is Probable porphobilinogen deaminase (Thermoplasma volcanium (strain ATCC 51530 / DSM 4299 / JCM 9571 / NBRC 15438 / GSS1)).